The chain runs to 308 residues: L-lactate dehydrogenase 2 (308 aa).

Residues valine 14, aspartate 35, tyrosine 65, and 79-80 (GA) each bind NAD(+). Position 88 (arginine 88) interacts with substrate. NAD(+) is bound at residue serine 101. 120-123 (NPVD) contacts substrate. Threonine 143 is a binding site for NAD(+). Position 148 to 151 (148 to 151 (DTAR)) interacts with substrate. The active-site Proton acceptor is histidine 175. Threonine 225 contacts substrate.

It belongs to the LDH/MDH superfamily. LDH family. Homotetramer.

It is found in the cytoplasm. It carries out the reaction (S)-lactate + NAD(+) = pyruvate + NADH + H(+). The protein operates within fermentation; pyruvate fermentation to lactate; (S)-lactate from pyruvate: step 1/1. Functionally, catalyzes the conversion of lactate to pyruvate. The chain is L-lactate dehydrogenase 2 from Lactobacillus johnsonii (strain CNCM I-12250 / La1 / NCC 533).